Reading from the N-terminus, the 298-residue chain is Mitochondrial nicotinamide adenine dinucleotide transporter SLC25A51 (298 aa).

Basic and acidic residues predominate over residues 1-11 (MMDSEAHEKRP). Residues 1-21 (MMDSEAHEKRPPMLTSSNQDL) form a disordered region. Solcar repeat units follow at residues 28 to 108 (VGDM…LSRL), 117 to 201 (PEFA…IKES), and 214 to 297 (NDFI…LLKI). 6 helical membrane passes run 36–56 (CGYC…KILF), 85–105 (LPPL…YEDL), 119–139 (FATR…LTPF), 180–200 (ILFR…PIKE), 216–236 (FICG…INVV), and 269–290 (LFRG…INAT).

This sequence belongs to the mitochondrial carrier (TC 2.A.29) family.

It localises to the mitochondrion inner membrane. The enzyme catalyses NAD(+)(in) = NAD(+)(out). Functionally, mitochondrial membrane carrier protein that mediates the import of NAD(+) into mitochondria. Mitochondrial NAD(+) is required for glycolysis and mitochondrial respiration. Compared to SLC25A52, SLC25A51-mediated transport is essential for the import of NAD(+) in mitochondria. The transport mechanism, uniport or antiport, its electrogenicity and substrate selectivity, remain to be elucidated. This Mus musculus (Mouse) protein is Mitochondrial nicotinamide adenine dinucleotide transporter SLC25A51.